The sequence spans 567 residues: Type 2 DNA topoisomerase 6 subunit B (567 aa).

ATP is bound by residues Asn-46, Asp-78, 99–100 (TK), 109–116 (GQQGIGIS), and Lys-472.

It belongs to the TOP6B family. In terms of assembly, homodimer. Heterotetramer of two Top6A and two Top6B chains.

It carries out the reaction ATP-dependent breakage, passage and rejoining of double-stranded DNA.. Functionally, relaxes both positive and negative superturns and exhibits a strong decatenase activity. This is Type 2 DNA topoisomerase 6 subunit B from Thermococcus kodakarensis (strain ATCC BAA-918 / JCM 12380 / KOD1) (Pyrococcus kodakaraensis (strain KOD1)).